A 459-amino-acid chain; its full sequence is Chromosomal replication initiator protein DnaA (459 aa).

A domain I, interacts with DnaA modulators region spans residues 1–90 (MAVSLWQQCI…RPASKPAAPA (90 aa)). The segment at 75–124 (RFDIGSRPASKPAAPAASTKSPVAPAAKSPSKPSFNSNEPAATANHRSNM) is disordered. Residues 80–108 (SRPASKPAAPAASTKSPVAPAAKSPSKPS) show a composition bias toward low complexity. Residues 91–122 (ASTKSPVAPAAKSPSKPSFNSNEPAATANHRS) form a domain II region. The segment covering 109-124 (FNSNEPAATANHRSNM) has biased composition (polar residues). The segment at 123–339 (NMNPTYQFDN…GALNRVIANA (217 aa)) is domain III, AAA+ region. G167, G169, K170, and T171 together coordinate ATP. Positions 340-459 (NFTGRPITID…YANLIRTLSS (120 aa)) are domain IV, binds dsDNA.

It belongs to the DnaA family. As to quaternary structure, oligomerizes as a right-handed, spiral filament on DNA at oriC.

It localises to the cytoplasm. Functionally, plays an essential role in the initiation and regulation of chromosomal replication. ATP-DnaA binds to the origin of replication (oriC) to initiate formation of the DNA replication initiation complex once per cell cycle. Binds the DnaA box (a 9 base pair repeat at the origin) and separates the double-stranded (ds)DNA. Forms a right-handed helical filament on oriC DNA; dsDNA binds to the exterior of the filament while single-stranded (ss)DNA is stabiized in the filament's interior. The ATP-DnaA-oriC complex binds and stabilizes one strand of the AT-rich DNA unwinding element (DUE), permitting loading of DNA polymerase. After initiation quickly degrades to an ADP-DnaA complex that is not apt for DNA replication. Binds acidic phospholipids. The chain is Chromosomal replication initiator protein DnaA from Shewanella loihica (strain ATCC BAA-1088 / PV-4).